Reading from the N-terminus, the 253-residue chain is Trypsin beta (253 aa).

The signal sequence occupies residues 1–22 (MLKFVILLSAVACALGGTIPEG). Residues 23 to 30 (LLPQLDGR) constitute a propeptide, activation peptide. The Peptidase S1 domain maps to 31-253 (IVGGTATTIS…DLRSWVINNA (223 aa)). Cys-56 and Cys-72 are joined by a disulfide. Active-site charge relay system residues include His-71 and Asp-116. Intrachain disulfides connect Cys-180–Cys-197 and Cys-206–Cys-230. Ser-210 acts as the Charge relay system in catalysis.

It belongs to the peptidase S1 family.

The protein resides in the secreted. The protein localises to the extracellular space. It catalyses the reaction Preferential cleavage: Arg-|-Xaa, Lys-|-Xaa.. This Drosophila erecta (Fruit fly) protein is Trypsin beta (betaTry).